We begin with the raw amino-acid sequence, 1278 residues long: Papilin (1278 aa).

A signal peptide spans 1–18; the sequence is MRLLLLVPLLLAPAPGSS. TSP type-1 domains lie at 26–80, 304–361, 362–421, 423–481, and 484–539; these read SDTW…ESCP, PGFS…HPCP, ETKR…ACNL, RCAA…EDCP, and SDQA…QPCH. 6 disulfides stabilise this stretch: C38–C74, C42–C79, C53–C64, C316–C355, C320–C360, and C331–C343. Residues 544-632 form a disordered region; sequence VPSMQDVHTP…SGSGPHDCRH (89 aa). Basic and acidic residues predominate over residues 582-599; that stretch reads PSARGDHRGERGDPRGDQ. Low complexity predominate over residues 608 to 620; the sequence is PAPSLQQPPYQQP. 3 disulfide bridges follow: C754–C804, C763–C787, and C779–C800. The BPTI/Kunitz inhibitor domain maps to 754–804; that stretch reads CLLPSAHGSCADWAARWYFVASVGQCNRFWYGGCHGNANNFASEQECMSSC. The segment at 805 to 901 is disordered; it reads QGSLHGPRRP…GGDAGSPAPP (97 aa). Ig-like C2-type domains follow at residues 900-995, 1033-1128, and 1133-1218; these read PPFH…LRII, PSSH…VQLR, and LTIS…TEVK. The cysteines at positions 931 and 978 are disulfide-linked. The interval 1014–1042 is disordered; that stretch reads RDPAQDFGQAGAAGPLGAIPSSHPQPANR. Intrachain disulfides connect C1065–C1112 and C1154–C1202. Positions 1231–1270 constitute a PLAC domain; the sequence is PGRDCVDQPELANCDLILQAQLCGNEYYSSFCCASCSRFQ.

It belongs to the papilin family.

Its subcellular location is the secreted. The protein is Papilin (PAPLN) of Homo sapiens (Human).